A 417-amino-acid chain; its full sequence is Probable sugar-binding periplasmic protein (417 aa).

Positions 1-21 (MLRKLLIGTALATSFAFSAHA) are cleaved as a signal peptide.

Belongs to the bacterial solute-binding protein 1 family.

It is found in the periplasm. Functionally, part of a binding-protein-dependent transport system for a sugar. This Mesorhizobium japonicum (strain LMG 29417 / CECT 9101 / MAFF 303099) (Mesorhizobium loti (strain MAFF 303099)) protein is Probable sugar-binding periplasmic protein.